The sequence spans 283 residues: Serine/threonine-protein phosphatase Pgam5, mitochondrial (283 aa).

Residues 7–23 form a helical membrane-spanning segment; it reads MYGLPSAAVAVGTALLN.

It belongs to the phosphoglycerate mutase family. BPG-dependent PGAM subfamily. As to quaternary structure, interacts with skn-1.

It localises to the mitochondrion outer membrane. The catalysed reaction is O-phospho-L-seryl-[protein] + H2O = L-seryl-[protein] + phosphate. The enzyme catalyses O-phospho-L-threonyl-[protein] + H2O = L-threonyl-[protein] + phosphate. Functionally, displays phosphatase activity for serine/threonine residues. Has apparently no phosphoglycerate mutase activity. This Caenorhabditis briggsae protein is Serine/threonine-protein phosphatase Pgam5, mitochondrial (pgam-5).